An 802-amino-acid chain; its full sequence is MNQFYKKSHYSIQKHQITGLLFLLFIYPFSTSYGNEQFSFDSRFLPSGYNYSLNSNLPPEGEYLVDIYINKIKKESAIIPFYIKGNKLVPCLSKEKISSLGININNNDNTECVETSKAGISNISFEFSSLRLFIAVPKNLLSEIDKISSKDIDNGIHALFFNYQVNTRLANNKNRYDYISVSPNINYFSWRLRNLFEFNQNNDEKTWERNYTYLEKSFYDKKLNLVVGESYTNSNVYNNYSFTGISVSTDTDMYTPSEIDYTPEIHGVADSDSQIIVRQGNTIIINESVPAGPFSFPITNLMYTGGQLNVEITDIYGNKKQYTVNNSSLPVMRKAGLMVYNFISGKLTKKNSEDGDFFTQGDINYGTHYNSTLFGGYQFSKNYFNLSTGIGTDLGFSGAWLLHVSRSNFKNKNGYNINLQQNTQLRPFNAGVNFDYAYRKKRYVELSDIGWHGNLYNQLKNSFSLSLSKSLNKYGNFSLDYNKMKYWDNAYDSNSMSIRYFFKFMRAMITTNCSLNKYQSYEKKDKRFSINISLPLTKDYGHISSNYSFSNANTGTATSSVGLNGSFFNDARLNWNIQQNRTTRNNGYTDNTSYIATSYASPYGVFTGSYSGSNKYSSQFYSASGGIVLHSDGVAFTQKAGDTSALVRIDNISDIKIGNTPGVYTGYNGFALIPHLQPFKKNTILINDKGIPDGITLANIKKQVIPSRGAIVKVKFDAKKGNDILFKLTTKDGKTPPLGAIAHEKNGKQINTGIVDDDGMLYMSGLSGTGIINVTWNGKVCSFPFSEKDISSKQLSVVNKQC.

This sequence belongs to the fimbrial export usher family.

The protein localises to the cell outer membrane. Functionally, involved in the export and assembly of C6 fimbrial subunits across the outer membrane. This Escherichia coli protein is Outer membrane usher protein CssD (cssD).